Consider the following 145-residue polypeptide: MIALIQRVSRASVVVDNQTIGAIDKGLLVLLGVEQEDTREKMEKLATKVMSYRMFSDENGKMNLNLEQVGGSLLVVSQFTLAADTGRGLRPSFSGAGTPDQALALYEEFVAFCRAKGVTTETGQFGADMQVSLVNDGPVTFNLQV.

Residues 137 to 138 (GP) carry the Gly-cisPro motif, important for rejection of L-amino acids motif.

This sequence belongs to the DTD family. In terms of assembly, homodimer.

It localises to the cytoplasm. The enzyme catalyses glycyl-tRNA(Ala) + H2O = tRNA(Ala) + glycine + H(+). It catalyses the reaction a D-aminoacyl-tRNA + H2O = a tRNA + a D-alpha-amino acid + H(+). In terms of biological role, an aminoacyl-tRNA editing enzyme that deacylates mischarged D-aminoacyl-tRNAs. Also deacylates mischarged glycyl-tRNA(Ala), protecting cells against glycine mischarging by AlaRS. Acts via tRNA-based rather than protein-based catalysis; rejects L-amino acids rather than detecting D-amino acids in the active site. By recycling D-aminoacyl-tRNA to D-amino acids and free tRNA molecules, this enzyme counteracts the toxicity associated with the formation of D-aminoacyl-tRNA entities in vivo and helps enforce protein L-homochirality. This chain is D-aminoacyl-tRNA deacylase, found in Shewanella baltica (strain OS155 / ATCC BAA-1091).